We begin with the raw amino-acid sequence, 217 residues long: Probable transaldolase (217 aa).

Lys83 functions as the Schiff-base intermediate with substrate in the catalytic mechanism.

The protein belongs to the transaldolase family. Type 3B subfamily.

Its subcellular location is the cytoplasm. It carries out the reaction D-sedoheptulose 7-phosphate + D-glyceraldehyde 3-phosphate = D-erythrose 4-phosphate + beta-D-fructose 6-phosphate. It functions in the pathway carbohydrate degradation; pentose phosphate pathway; D-glyceraldehyde 3-phosphate and beta-D-fructose 6-phosphate from D-ribose 5-phosphate and D-xylulose 5-phosphate (non-oxidative stage): step 2/3. Its function is as follows. Transaldolase is important for the balance of metabolites in the pentose-phosphate pathway. This chain is Probable transaldolase, found in Bartonella tribocorum (strain CIP 105476 / IBS 506).